The following is a 13041-amino-acid chain: Nonribosomal peptide synthetase kk1B (13041 aa).

The tract at residues 267-663 is adenylation 1; it reads ANRVVDTPQK…GRRDSQIKIR (397 aa). Residues 788-864 form the Carrier 1 domain; it reads ASLMTEGITL…GLINVMQQSS (77 aa). Residue S825 is modified to O-(pantetheine 4'-phosphoryl)serine. The interval 882-1313 is condensation 1; sequence SFAQGRLWFL…TPIAHLQLTD (432 aa). The segment at 1341–1736 is adenylation 2; the sequence is FQKQVAACPN…GRMDFQIKIR (396 aa). One can recognise a Carrier 2 domain in the interval 1865 to 1939; it reads AARNEIEAVL…NLAATIKRGS (75 aa). S1899 bears the O-(pantetheine 4'-phosphoryl)serine mark. Residues 1957–2383 are condensation 2; that stretch reads SFAQGRLWFL…DQPQTPLALL (427 aa). Positions 2418-2812 are adenylation 3; the sequence is QVAASPNATA…GRMDQQIKIR (395 aa). The methyltransferase (M) domain 1 stretch occupies residues 2891–3023; the sequence is VGNDFMGWTS…EYLSKVLYAL (133 aa). A Carrier 3 domain is found at 3353–3427; sequence GARNETEAVL…DLAASIRRGS (75 aa). S3387 bears the O-(pantetheine 4'-phosphoryl)serine mark. The condensation 3 stretch occupies residues 3445-3869; the sequence is SFAQGRLWFL…DQPQIPIAVL (425 aa). The adenylation 4 stretch occupies residues 3901 to 4300; sequence FRAQVVACPD…GRMDQQVKIR (400 aa). The Carrier 4 domain maps to 4412–4486; the sequence is PPRNEIETIL…NLAAAVQRGS (75 aa). At S4446 the chain carries O-(pantetheine 4'-phosphoryl)serine. The interval 4504 to 4935 is condensation 4; it reads SFAQGRLWFL…TPIAALSLTD (432 aa). The interval 4963-5362 is adenylation 5; the sequence is FREQVATYPD…GRMDRQLKIR (400 aa). The segment at 5430 to 5567 is methyltransferase (M) domain 2; it reads TYAELDTLVK…VAQYFPTPEY (138 aa). Residues 5897–5971 enclose the Carrier 5 domain; the sequence is QPRNEVEAVL…DLAAAIQRGS (75 aa). S5931 is subject to O-(pantetheine 4'-phosphoryl)serine. The tract at residues 5989-6416 is condensation 5; the sequence is SYAQGRLWFL…DQPQTPLALL (428 aa). An adenylation 6 region spans residues 6451-6845; that stretch reads QVAASPNATA…GRMDQQIKIR (395 aa). A methyltransferase (M) domain 3 region spans residues 6924-7056; sequence VGNDFMGWTS…EYLSKVLYAL (133 aa). The region spanning 7386-7460 is the Carrier 6 domain; that stretch reads GARNEIEAAL…DLAGAVQRGS (75 aa). Position 7420 is an O-(pantetheine 4'-phosphoryl)serine (S7420). Residues 7478–7901 are condensation 6; it reads SFAQGRLWFL…GLETPRLPIS (424 aa). The tract at residues 7934-8335 is adenylation 7; sequence FRTQVAASPD…GRMDRQLKIR (402 aa). The interval 8404–8540 is methyltransferase (M) domain 4; that stretch reads YAEIEEIDSS…AQYFPSPEYL (137 aa). One can recognise a Carrier 7 domain in the interval 8871-8945; the sequence is GPRNEIEALL…DLAASIQRGS (75 aa). Position 8905 is an O-(pantetheine 4'-phosphoryl)serine (S8905). Residues 8963 to 9392 form a condensation 7 region; the sequence is SFAQGRLWFL…PKTPIAVLPL (430 aa). The adenylation 8 stretch occupies residues 9422 to 9822; the sequence is FRQQVAARPD…SRMDQQVKIR (401 aa). The 75-residue stretch at 9943–10017 folds into the Carrier 8 domain; it reads PPTNDMERIL…DLASTIKQDS (75 aa). Position 9977 is an O-(pantetheine 4'-phosphoryl)serine (S9977). The tract at residues 10035-10462 is condensation 8; the sequence is SFAQGRLWFL…ETPQTPLAVL (428 aa). Residues 10494–10892 form an adenylation 9 region; that stretch reads FRAQVAACPD…GRMDQQIKIR (399 aa). Residues 10959–11105 form a methyltransferase (M) domain 5 region; sequence IYAEIEEIDS…EYLADVVGAL (147 aa). The 75-residue stretch at 11428-11502 folds into the Carrier 9 domain; that stretch reads SARNEVEAVL…DLAASIERNS (75 aa). O-(pantetheine 4'-phosphoryl)serine is present on S11462. Positions 11520–11945 are condensation 9; sequence SFAQGRLWFL…EQPQTPIAVL (426 aa). Positions 11977–12377 are adenylation 10; the sequence is FRDQVAANPR…GRMDQQIKIR (401 aa). One can recognise a Carrier 10 domain in the interval 12495-12569; the sequence is VPRNELEASL…DLALKVSSYI (75 aa). Position 12529 is an O-(pantetheine 4'-phosphoryl)serine (S12529). Positions 12647–13032 are condensation 10; the sequence is FPANADCDKI…RMHEEFCDII (386 aa).

Belongs to the NRP synthetase family.

The protein operates within secondary metabolite biosynthesis. Its function is as follows. Nonribosomal peptide synthetase; part of the gene cluster that mediates the biosynthesis of KK-1, a novel cyclic depsipeptide with 10 residues which is a promising active compound with high activity against many plant pathogens, especially Botrytis cinerea. The nonribosomal peptide synthetase (NRPS) kk1B catalyzes the elongation and cyclization of the decapeptide chain composed of 1 D-lactic acid residue (D-Lac), 1 pipecolic acid residue (Pip), 1 aspartic acid residue (Asp), 1 isoleucine residue (Ile), 1 glycine residue (Gly), 1 tyrosine residue (Tyr) and 4 valine residues (Val). The Asp, Ile and 3 Val residues are N-methylated by the 5 methyltransferase domains from the NRPS (found in modules 3, 5, 6, 7 and 9), whereas the Tyr residue is O-methylated by the cluster encoded O-methyltransferase kk1A. Cyclization with the hydroxy group of the D-lactic acid as a nucleophile is presumed to occur in the final module of NRPS, resulting in the formation of the depsipeptide ester bond through macrocyclization by the C-terminal C domain. The thioesterase kk1J is likely to be involved in the corrective mechanism of peptide chain synthesis. The D-lactate dehydrogenase kk1H is involved in the synthesis of D-lactic acid from pyruvic acid, which is recognized by the A domain of the first kk1B module. The pyrroline-5-carboxylate reductase kk1I is involved in the synthesis of the L-pipecolic acid residue of KK-1 from delta-1-pyrroline-5-carboxylate (P5C), a metabolic intermediate of lysine. It is still unclear how kk1C and kk1D are involved in the production of KK-1. The polypeptide is Nonribosomal peptide synthetase kk1B (Curvularia clavata).